Here is a 510-residue protein sequence, read N- to C-terminus: Catalase (510 aa).

A signal peptide spans 1 to 26 (MPLLNWSRHMVCLTAAGLITVPTVYA). Active-site residues include His78 and Asn150. Tyr358 lines the heme pocket. Residues 386-400 (NQDGALNTGHTTSGV) show a composition bias toward polar residues. Residues 386–412 (NQDGALNTGHTTSGVNYEPSRLEPRPA) are disordered.

It belongs to the catalase family. It depends on heme as a cofactor.

The protein localises to the periplasm. It catalyses the reaction 2 H2O2 = O2 + 2 H2O. Decomposes hydrogen peroxide into water and oxygen; serves to protect cells from the toxic effects of hydrogen peroxide. This is Catalase (katB) from Pseudomonas syringae pv. syringae.